The primary structure comprises 91 residues: CRISPR-associated endoribonuclease Cas2 (91 aa).

A Mg(2+)-binding site is contributed by D14.

It belongs to the CRISPR-associated endoribonuclease Cas2 protein family. In terms of assembly, homodimer, forms a heterotetramer with a Cas1 homodimer. The cofactor is Mg(2+).

Functionally, CRISPR (clustered regularly interspaced short palindromic repeat), is an adaptive immune system that provides protection against mobile genetic elements (viruses, transposable elements and conjugative plasmids). CRISPR clusters contain sequences complementary to antecedent mobile elements and target invading nucleic acids. CRISPR clusters are transcribed and processed into CRISPR RNA (crRNA). Functions as a ssRNA-specific endoribonuclease. Involved in the integration of spacer DNA into the CRISPR cassette. The protein is CRISPR-associated endoribonuclease Cas2 of Nanoarchaeum equitans (strain Kin4-M).